The following is a 61-amino-acid chain: uncharacterized protein (61 aa).

This is an uncharacterized protein from Haemophilus influenzae (strain ATCC 51907 / DSM 11121 / KW20 / Rd).